Reading from the N-terminus, the 330-residue chain is Syntaxin-121 (330 aa).

The span at 1–10 shows a compositional bias: polar residues; that stretch reads MNNLFSSSWK. The tract at residues 1–39 is disordered; it reads MNNLFSSSWKRTGGGGGGDGDIESGGGVEMAPPPGAAAG. Over 1-284 the chain is Cytoplasmic; sequence MNNLFSSSWK…RKHQKSTRKW (284 aa). Residues 12–28 are compositionally biased toward gly residues; sequence TGGGGGGDGDIESGGGV. Residues 212-274 form the t-SNARE coiled-coil homology domain; sequence VAEIQERHGA…DRGREQLVVA (63 aa). Residues 285–305 traverse the membrane as a helical; Anchor for type IV membrane protein segment; the sequence is TCIAIIILLVLILVVVLPIVL. Over 306-330 the chain is Vesicular; that stretch reads KFVNNNKSSSSSPAPATPSPPPPTA. A disordered region spans residues 311-330; it reads NKSSSSSPAPATPSPPPPTA. The span at 320–330 shows a compositional bias: pro residues; the sequence is PATPSPPPPTA.

It belongs to the syntaxin family. As to quaternary structure, interacts with SNAP32. Expressed in roots, stems, leaf blades and leaf sheaths.

The protein localises to the cell membrane. In terms of biological role, vesicle trafficking protein that functions in the secretory pathway. Involved in plant defense by mediating host resistance to the rice blast fungus Magnaporthe oryzae. The interaction with SNAP32 may contribute to host resistance to the rice blast fungus. This chain is Syntaxin-121, found in Oryza sativa subsp. japonica (Rice).